The sequence spans 846 residues: DNA mismatch repair protein MutS (846 aa).

Residue 594–601 coordinates ATP; sequence GPNMSGKS.

The protein belongs to the DNA mismatch repair MutS family.

Functionally, this protein is involved in the repair of mismatches in DNA. It is possible that it carries out the mismatch recognition step. This protein has a weak ATPase activity. This chain is DNA mismatch repair protein MutS, found in Macrococcus caseolyticus (strain JCSC5402) (Macrococcoides caseolyticum).